The following is a 360-amino-acid chain: MPTATPATAPVTTTDVLIVGAGPVGLFAAFQAGVLGLKCELIDVLDRAGGQCTELYPEKPIYDIPAVPGCLAQDLVDRLLEQCAPFDFPMHFGQRAESVAEIPAPAASAGHAGHERLLVTTDGGKRFDVAAVLICAGAGAFAPQRVSLPEAAALEGRHVHYAVRDVSHFAGKRVIVAGGGDSALDWALALRKVAARVTLLHRREGFRAADGTVAEMRRAVAEGEMDFVVGMLGALRTEGADGGLSEVEVRTRDGSTVLPAEELVALYGLVSEPGPIAQWDLDMRAGRILVDTTTYESSRRGIFAAGDIAFYPNKQKLILSGFHEAALALRKAYHYAFPEKALVHVHTSNNAALKEKLTHA.

7 residues coordinate FAD: aspartate 43, glutamine 51, tyrosine 56, alanine 96, phenylalanine 141, aspartate 307, and serine 348.

It belongs to the ferredoxin--NADP reductase type 2 family. As to quaternary structure, homodimer. FAD is required as a cofactor.

It carries out the reaction 2 reduced [2Fe-2S]-[ferredoxin] + NADP(+) + H(+) = 2 oxidized [2Fe-2S]-[ferredoxin] + NADPH. In Cupriavidus taiwanensis (strain DSM 17343 / BCRC 17206 / CCUG 44338 / CIP 107171 / LMG 19424 / R1) (Ralstonia taiwanensis (strain LMG 19424)), this protein is Ferredoxin--NADP reductase 1.